The chain runs to 312 residues: Olfactory receptor 2M3 (312 aa).

The Extracellular portion of the chain corresponds to 1–25 (MARENSTFNSDFILLGIFNHSPTHT). N-linked (GlcNAc...) asparagine glycosylation occurs at Asn5. The chain crosses the membrane as a helical span at residues 26–49 (FLFFLVLAIFSVAFMGNSVMVLLI). Residues 50–57 (YLDTQLHT) lie on the Cytoplasmic side of the membrane. A helical membrane pass occupies residues 58 to 79 (PMYLLLSQLSLMDLMLICTTVP). The Extracellular portion of the chain corresponds to 80–100 (KMAFNYLSGSKSISMAGCATQ). Cys97 and Cys189 form a disulfide bridge. A helical membrane pass occupies residues 101–120 (IFFYTSLLGSECFLLAVMAY). Over 121 to 139 (DRYTAICHPLRYTNLMSPK) the chain is Cytoplasmic. Residues 140–158 (ICGLMTAFSWILGSTDGII) form a helical membrane-spanning segment. Residues 159–195 (DVVATFSFSYCGSREIAHFFCDFPSLLILSCSDTSIF) are Extracellular-facing. A helical transmembrane segment spans residues 196-219 (EKILFICCIVMIVFPVAIIIASYA). Over 220–236 (RVILAVIHMGSGEGRRK) the chain is Cytoplasmic. Residues 237–259 (AFTTCSSHLLVVGMYYGAALFMY) form a helical membrane-spanning segment. Residues 260–272 (IRPTSDRSPTQDK) lie on the Extracellular side of the membrane. A helical membrane pass occupies residues 273 to 292 (MVSVFYTILTPMLNPLIYSL). Residues 293–312 (RNKEVTRAFMKILGKGKSGE) are Cytoplasmic-facing.

The protein belongs to the G-protein coupled receptor 1 family.

It is found in the cell membrane. Odorant receptor. The polypeptide is Olfactory receptor 2M3 (OR2M3) (Homo sapiens (Human)).